Reading from the N-terminus, the 119-residue chain is Protein TusC (119 aa).

This sequence belongs to the DsrF/TusC family. In terms of assembly, heterohexamer, formed by a dimer of trimers. The hexameric TusBCD complex contains 2 copies each of TusB, TusC and TusD. The TusBCD complex interacts with TusE.

Its subcellular location is the cytoplasm. In terms of biological role, part of a sulfur-relay system required for 2-thiolation of 5-methylaminomethyl-2-thiouridine (mnm(5)s(2)U) at tRNA wobble positions. This chain is Protein TusC, found in Klebsiella pneumoniae (strain 342).